Reading from the N-terminus, the 422-residue chain is Glucuronoxylanase XynC (422 aa).

The first 32 residues, 1 to 32, serve as a signal peptide directing secretion; the sequence is MIPRIKKTICVLLVCFTMLSVMLGPGATEVLA. The active-site Proton donor is glutamate 171. Glutamate 260 acts as the Nucleophile in catalysis.

Belongs to the glycosyl hydrolase 30 family.

It localises to the secreted. It catalyses the reaction Endohydrolysis of (1-&gt;4)-beta-D-xylosyl links in some glucuronoarabinoxylans.. Its pathway is glycan degradation; xylan degradation. In terms of biological role, catalyzes the depolymerization of methylglucuronoxylan (MeGAXn) from different sources. It cleaves the beta-1,4-xylosidic bond penultimate to that linking carbon one of the xylose residue substituted with alpha-1,2-linked 4-O-methyl-D-glucuronate (MeGA). The polypeptide is Glucuronoxylanase XynC (xynC) (Bacillus subtilis (strain 168)).